Consider the following 365-residue polypeptide: C-X-C chemokine receptor type 3 (365 aa).

At methionine 1 to proline 57 the chain is on the extracellular side. Asparagine 22 carries an N-linked (GlcNAc...) asparagine glycan. A sulfotyrosine mark is found at tyrosine 27 and tyrosine 29. N-linked (GlcNAc...) asparagine glycosylation is present at asparagine 32. A helical transmembrane segment spans residues alanine 58–leucine 78. Residues cysteine 79–threonine 88 are Cytoplasmic-facing. Residues aspartate 89–tryptophan 109 form a helical membrane-spanning segment. Residues arginine 110–valine 126 lie on the Extracellular side of the membrane. Cysteines 124 and 203 form a disulfide. Residues alanine 127–phenylalanine 147 form a helical membrane-spanning segment. Topologically, residues aspartate 148–threonine 169 are cytoplasmic. Residues leucine 170–leucine 190 traverse the membrane as a helical segment. The Extracellular segment spans residues serine 191 to glycine 223. The chain crosses the membrane as a helical span at residues phenylalanine 224–valine 244. At serine 245 to leucine 256 the chain is on the cytoplasmic side. A helical membrane pass occupies residues valine 257–valine 277. Residues aspartate 278–serine 301 are Extracellular-facing. A helical membrane pass occupies residues valine 302–glycine 322. Topologically, residues valine 323–arginine 365 are cytoplasmic. The interval arginine 342–arginine 365 is disordered.

Belongs to the G-protein coupled receptor 1 family. As to quaternary structure, homomer. Forms heteromers with ACKR4. Interacts with PF4/CXCL4. Sulfation on Tyr-27 and Tyr-29 is essential for CXCL10 binding. In terms of processing, N-glycosylated.

The protein resides in the cell membrane. Functionally, receptor for the C-X-C chemokine CXCL9, CXCL10 and CXCL11 and mediates the proliferation, survival and angiogenic activity of mesangial cells through a heterotrimeric G-protein signaling pathway. Probably promotes cell chemotaxis response. Binds to CCL21. Upon activation by PF4, induces activated T-lymphocytes migration mediated via downstream Ras/extracellular signal-regulated kinase (ERK) signaling. This Canis lupus familiaris (Dog) protein is C-X-C chemokine receptor type 3 (CXCR3).